A 696-amino-acid polypeptide reads, in one-letter code: Glycine--tRNA ligase beta subunit (696 aa).

Belongs to the class-II aminoacyl-tRNA synthetase family. Tetramer of two alpha and two beta subunits.

The protein resides in the cytoplasm. It carries out the reaction tRNA(Gly) + glycine + ATP = glycyl-tRNA(Gly) + AMP + diphosphate. This Aromatoleum aromaticum (strain DSM 19018 / LMG 30748 / EbN1) (Azoarcus sp. (strain EbN1)) protein is Glycine--tRNA ligase beta subunit.